A 378-amino-acid polypeptide reads, in one-letter code: 23S rRNA (uracil(747)-C(5))-methyltransferase RlmC (378 aa).

[4Fe-4S] cluster contacts are provided by Cys-3, Cys-11, Cys-14, and Cys-87. The S-adenosyl-L-methionine site is built by Gln-212, Phe-241, Glu-262, and Asn-309. The Nucleophile role is filled by Cys-336.

It belongs to the class I-like SAM-binding methyltransferase superfamily. RNA M5U methyltransferase family. RlmC subfamily.

It catalyses the reaction uridine(747) in 23S rRNA + S-adenosyl-L-methionine = 5-methyluridine(747) in 23S rRNA + S-adenosyl-L-homocysteine + H(+). Catalyzes the formation of 5-methyl-uridine at position 747 (m5U747) in 23S rRNA. The protein is 23S rRNA (uracil(747)-C(5))-methyltransferase RlmC of Shewanella pealeana (strain ATCC 700345 / ANG-SQ1).